The sequence spans 215 residues: 3-dehydroquinate dehydratase (215 aa).

Residues 27-29 and Arg-54 contribute to the 3-dehydroquinate site; that span reads ELR. Catalysis depends on His-112, which acts as the Proton donor/acceptor. Residue Lys-139 is the Schiff-base intermediate with substrate of the active site. 2 residues coordinate 3-dehydroquinate: Arg-176 and Gln-198.

The protein belongs to the type-I 3-dehydroquinase family. As to quaternary structure, homodimer.

It catalyses the reaction 3-dehydroquinate = 3-dehydroshikimate + H2O. It functions in the pathway metabolic intermediate biosynthesis; chorismate biosynthesis; chorismate from D-erythrose 4-phosphate and phosphoenolpyruvate: step 3/7. Its function is as follows. Involved in the third step of the chorismate pathway, which leads to the biosynthesis of aromatic amino acids. Catalyzes the cis-dehydration of 3-dehydroquinate (DHQ) and introduces the first double bond of the aromatic ring to yield 3-dehydroshikimate. In Pyrococcus abyssi (strain GE5 / Orsay), this protein is 3-dehydroquinate dehydratase.